A 195-amino-acid polypeptide reads, in one-letter code: MGSVSNQEITGGLPKSLDETADIHKSDESLIFQGSGVCKWFNVRMGFGFLTMTKKEGTDLETPVDVFVHQSKLHMEGFRSLKEGESVEFTFKKSSKGLESTRVTGPGGAPCIGSERRPKVKGQQKRRQKGDRCYNCGGLDHHAKECKLPPQPKKCHFCQSPNHMVAQCPAKASQAANLEEQPISEEQELIPETME.

One can recognise a CSD domain in the interval 33 to 106 (QGSGVCKWFN…GLESTRVTGP (74 aa)). The segment at 98–126 (LESTRVTGPGGAPCIGSERRPKVKGQQKR) is disordered. A flexible linker region spans residues 107–130 (GGAPCIGSERRPKVKGQQKRRQKG). 2 consecutive CCHC-type zinc fingers follow at residues 131–148 (DRCY…ECKL) and 153–170 (KKCH…QCPA). The Zn(2+) site is built by C133, C136, H141, C146, C155, C158, H163, and C168. Residues 175–195 (AANLEEQPISEEQELIPETME) are disordered. The span at 182 to 195 (PISEEQELIPETME) shows a compositional bias: acidic residues.

The protein belongs to the lin-28 family. As to quaternary structure, monomer.

It is found in the cytoplasm. The protein resides in the rough endoplasmic reticulum. Its subcellular location is the P-body. It localises to the stress granule. The protein localises to the nucleus. It is found in the nucleolus. RNA-binding protein that inhibits processing of pre-let-7 miRNAs and regulates translation of mRNAs that control developmental timing, pluripotency and metabolism. Seems to recognize a common structural G-quartet (G4) feature in its miRNA and mRNA targets. 'Translational enhancer' that drives specific mRNAs to polysomes and increases the efficiency of protein synthesis. Its association with the translational machinery and target mRNAs results in an increased number of initiation events per molecule of mRNA and, indirectly, in mRNA stabilization. Suppressor of microRNA (miRNA) biogenesis, including that of let-7. Binds specific target miRNA precursors (pre-miRNAs), recognizing an 5'-GGAG-3' motif found in their terminal loop, and recruits uridylyltransferase. This results in the terminal uridylation of target pre-miRNAs. Uridylated pre-miRNAs fail to be processed by Dicer and undergo degradation. Localized to the periendoplasmic reticulum area, binds to a large number of spliced mRNAs and inhibits the translation of mRNAs destined for the ER, reducing the synthesis of transmembrane proteins, ER or Golgi lumen proteins, and secretory proteins. Binds to and enhances the translation of mRNAs for several metabolic enzymes, increasing glycolysis and oxidative phosphorylation. Which, with the let-7 repression may enhance tissue repair in adult tissue. This chain is Protein lin-28 homolog A (lin28a), found in Xenopus tropicalis (Western clawed frog).